Reading from the N-terminus, the 243-residue chain is Tetraspanin-36 (243 aa).

Topologically, residues 1-9 (MDCGIITSK) are cytoplasmic. A helical membrane pass occupies residues 10–30 (TILLLLSLIFWAAGAALAYVG). Topologically, residues 31–49 (SYVIKSYNNFEDFMSDRHT) are lumenal. A helical membrane pass occupies residues 50–70 (LIPAAIIIGVAVVMFIIGFVG). Topologically, residues 71 to 84 (CCATLRESKVGLGL) are cytoplasmic. Residues 85–105 (FLIIIMLIFAAEVTAFVFGII) traverse the membrane as a helical segment. At 106-208 (YRGRIRGDLE…QVLQDVLSYA (103 aa)) the chain is on the lumenal side. N-linked (GlcNAc...) asparagine glycans are attached at residues asparagine 149, asparagine 163, and asparagine 174. The chain crosses the membrane as a helical span at residues 209–229 (MLVILGFAIIKFFGMLSVCVI). Topologically, residues 230-243 (TCKSKKNEYQPLYA) are cytoplasmic.

This sequence belongs to the tetraspanin (TM4SF) family. N-glycosylated. Strongly expressed in melanophores and xanthophores. Also detected in eye, brain, heart, skin, fin, testis and ovary.

The protein resides in the golgi apparatus membrane. The protein localises to the endoplasmic reticulum membrane. In terms of biological role, plays a role in migration and segregation of pigment cells (melanophores and xanthophores). Contributes to pigment stripe patterning in the epidermis. This Danio rerio (Zebrafish) protein is Tetraspanin-36.